The chain runs to 511 residues: 2-isopropylmalate synthase (511 aa).

The span at 1-16 (MTRKIDIFDTTLRDGE) shows a compositional bias: basic and acidic residues. The disordered stretch occupies residues 1–23 (MTRKIDIFDTTLRDGEQSPGASM). A Pyruvate carboxyltransferase domain is found at 5–268 (IDIFDTTLRD…HTDVVTQELT (264 aa)). D14, H203, H205, and N239 together coordinate Mn(2+). The tract at residues 392 to 511 (ALESVQVVCG…IQTTRSKQGK (120 aa)) is regulatory domain.

Belongs to the alpha-IPM synthase/homocitrate synthase family. LeuA type 1 subfamily. Homodimer. Requires Mn(2+) as cofactor.

It localises to the cytoplasm. It catalyses the reaction 3-methyl-2-oxobutanoate + acetyl-CoA + H2O = (2S)-2-isopropylmalate + CoA + H(+). Its pathway is amino-acid biosynthesis; L-leucine biosynthesis; L-leucine from 3-methyl-2-oxobutanoate: step 1/4. Catalyzes the condensation of the acetyl group of acetyl-CoA with 3-methyl-2-oxobutanoate (2-ketoisovalerate) to form 3-carboxy-3-hydroxy-4-methylpentanoate (2-isopropylmalate). The chain is 2-isopropylmalate synthase from Olsenella uli (strain ATCC 49627 / DSM 7084 / CCUG 31166 / CIP 109912 / JCM 12494 / LMG 11480 / NCIMB 702895 / VPI D76D-27C) (Lactobacillus uli).